The primary structure comprises 161 residues: Non-secretory ribonuclease (161 aa).

A signal peptide spans 1–27 (MVPKLFTSQICLLLLLGLMGVEGSLHA). A C-linked (Man) tryptophan glycan is attached at tryptophan 34. The Proton acceptor role is filled by histidine 42. Residue asparagine 44 is glycosylated (N-linked (GlcNAc...) asparagine). 4 disulfides stabilise this stretch: cysteine 50–cysteine 110, cysteine 64–cysteine 123, cysteine 82–cysteine 138, and cysteine 89–cysteine 98. Tyrosine 60 bears the 3'-nitrotyrosine mark. Position 65–69 (65–69 (KNQNT)) interacts with substrate. 4 N-linked (GlcNAc...) asparagine glycosylation sites follow: asparagine 86, asparagine 92, asparagine 111, and asparagine 119. Catalysis depends on histidine 156, which acts as the Proton donor.

Belongs to the pancreatic ribonuclease family. Interacts with and forms a tight 1:1 complex with RNH1. Dimerization of two such complexes may occur.

The protein resides in the lysosome. Its subcellular location is the cytoplasmic granule. The catalysed reaction is an [RNA] containing cytidine + H2O = an [RNA]-3'-cytidine-3'-phosphate + a 5'-hydroxy-ribonucleotide-3'-[RNA].. The enzyme catalyses an [RNA] containing uridine + H2O = an [RNA]-3'-uridine-3'-phosphate + a 5'-hydroxy-ribonucleotide-3'-[RNA].. In terms of biological role, this is a non-secretory ribonuclease. It is a pyrimidine specific nuclease with a slight preference for U. Cytotoxin and helminthotoxin. Possesses a wide variety of biological activities. The chain is Non-secretory ribonuclease (RNASE2) from Nomascus leucogenys (Northern white-cheeked gibbon).